Here is a 156-residue protein sequence, read N- to C-terminus: Small ribosomal subunit protein uS7 (156 aa).

This sequence belongs to the universal ribosomal protein uS7 family. In terms of assembly, part of the 30S ribosomal subunit. Contacts proteins S9 and S11.

Functionally, one of the primary rRNA binding proteins, it binds directly to 16S rRNA where it nucleates assembly of the head domain of the 30S subunit. Is located at the subunit interface close to the decoding center, probably blocks exit of the E-site tRNA. In Shewanella woodyi (strain ATCC 51908 / MS32), this protein is Small ribosomal subunit protein uS7.